The primary structure comprises 156 residues: CKLF-like MARVEL transmembrane domain-containing protein 5 (156 aa).

The region spanning 29–146 (FLSSLKGILL…DAFKIYRTEL (118 aa)) is the MARVEL domain. 4 helical membrane passes run 35-55 (GILLETELALTFIIFICFTAS), 56-76 (ISAYMAAALLEFLITLAFLFL), 93-113 (LDFLRCLSAIVIFLVVSFAAV), and 119-139 (AAIAAFVFGIILVSVFAYDAF).

Belongs to the chemokine-like factor family.

The protein resides in the membrane. In Mus musculus (Mouse), this protein is CKLF-like MARVEL transmembrane domain-containing protein 5 (Cmtm5).